The primary structure comprises 150 residues: Deoxyuridine 5'-triphosphate nucleotidohydrolase (150 aa).

Residues 69–71, Asn82, 86–88, and Met96 contribute to the substrate site; these read RSG and LID.

This sequence belongs to the dUTPase family. Mg(2+) serves as cofactor.

The enzyme catalyses dUTP + H2O = dUMP + diphosphate + H(+). It functions in the pathway pyrimidine metabolism; dUMP biosynthesis; dUMP from dCTP (dUTP route): step 2/2. Functionally, this enzyme is involved in nucleotide metabolism: it produces dUMP, the immediate precursor of thymidine nucleotides and it decreases the intracellular concentration of dUTP so that uracil cannot be incorporated into DNA. The protein is Deoxyuridine 5'-triphosphate nucleotidohydrolase of Alcanivorax borkumensis (strain ATCC 700651 / DSM 11573 / NCIMB 13689 / SK2).